The following is a 419-amino-acid chain: Coiled-coil domain-containing protein 85C (419 aa).

Alanine 2 carries the N-acetylalanine modification. Coiled coils occupy residues 22–88 and 118–159; these read ELLR…RELC and HEVA…AALA. Disordered regions lie at residues 162-268 and 307-348; these read GAAS…DPSS and HSES…AGQK. Residues 164–175 show a composition bias toward gly residues; the sequence is ASGGGGGGGGAG. Low complexity predominate over residues 176–189; it reads SRSSIDSQASLSGP. Position 178 is a phosphoserine (serine 178). Pro residues predominate over residues 224-233; the sequence is PPPLLPPGPH. Serine 246 carries the phosphoserine modification. Residues 307–325 are compositionally biased toward polar residues; sequence HSESQLASLPPSYQDSLQN. The span at 329–338 shows a compositional bias: pro residues; the sequence is CPAPELPSPP.

The protein belongs to the CCDC85 family. As to quaternary structure, may interact with ARVCF, CTNND1, CTNND2 and PKP4.

The protein localises to the cell junction. Its subcellular location is the tight junction. It is found in the adherens junction. May play a role in cell-cell adhesion and epithelium development through its interaction with proteins of the beta-catenin family. May play an important role in cortical development, especially in the maintenance of radial glia. The sequence is that of Coiled-coil domain-containing protein 85C (CCDC85C) from Homo sapiens (Human).